Consider the following 63-residue polypeptide: uncharacterized protein (63 aa).

The N-terminal stretch at 1–18 (MLNSEHFNLIQRALDATA) is a signal peptide.

This is an uncharacterized protein from Bacillus subtilis (strain 168).